A 662-amino-acid chain; its full sequence is Potassium channel KAT3 (662 aa).

The Cytoplasmic segment spans residues 1–90; the sequence is MSTTTTEARS…HFDRRYRLWE (90 aa). Residues 91 to 111 traverse the membrane as a helical segment; that stretch reads LFLVILVGYSAWASLFELAFE. At 112–118 the chain is on the extracellular side; the sequence is KAAEGAL. The chain crosses the membrane as a helical span at residues 119-139; that stretch reads LTIDLVVDFFFAVDIILTFFV. Residues 140–163 are Cytoplasmic-facing; the sequence is SYLDNTTYLNVTDHKLIAKRYLKS. A helical transmembrane segment spans residues 164-184; that stretch reads VAFVMDVASTLPIQFIYKTIT. Residues 185–194 lie on the Extracellular side of the membrane; sequence GDVGRGQAFG. Residues 195–215 traverse the membrane as a helical; Voltage-sensor segment; the sequence is FLNLLRLWRLRRVAELFKRLE. At 216 to 229 the chain is on the cytoplasmic side; the sequence is KDAHFNYFVIRVIK. A helical membrane pass occupies residues 230-250; it reads LLCVTIFWIHLAGCILYWIAY. The Extracellular segment spans residues 251-277; that stretch reads HYPRPTDTWIGSQVEDFKERSVWLGYT. Positions 278-297 form an intramembrane region, pore-forming; that stretch reads YSMYWSIVTLTTVGYGDLHA. Over 298 to 301 the chain is Extracellular; it reads VNSR. A helical membrane pass occupies residues 302–322; that stretch reads EKTFNMFYMLFNIGLTSYIIG. Topologically, residues 323-662 are cytoplasmic; that stretch reads IMTNLVVHGA…LRENDHLYIF (340 aa). A nucleoside 3',5'-cyclic phosphate is bound at residue 406-527; the sequence is LFKGFPEGLL…MIIANFMTYL (122 aa). Positions 528 to 558 form a coiled coil; it reads KGLNDELKKEIPFLRDLLDDADAQVQETVQS. One can recognise a KHA domain in the interval 591-662; that stretch reads RVIIHGQAPP…LRENDHLYIF (72 aa).

Belongs to the potassium channel family. Plant (TC 1.A.1.4) subfamily. The potassium channel is probably composed of a homo- or heterotetrameric complex of pore-forming subunits. May interact with AKT1 and AKT2. Interacts with SLAC1. In terms of tissue distribution, expressed predominantly in root hairs and root endodermis and, at a lower level, in leaf nodes, trichomes, and hydathodes.

The protein localises to the membrane. Probable modulatory (alpha) subunit of inward-rectifying potassium channels. Could mediate potassium uptake from the soil solution by plant roots in association with AKT1. This chain is Potassium channel KAT3 (KAT3), found in Arabidopsis thaliana (Mouse-ear cress).